Here is a 592-residue protein sequence, read N- to C-terminus: Probable oxidoreductase EphD (592 aa).

The region spanning 30–286 (PTVVLVHGFP…KAGHFSPMSH (257 aa)) is the AB hydrolase-1 domain. S461 provides a ligand contact to substrate. Catalysis depends on Y474, which acts as the Proton acceptor.

Belongs to the short-chain dehydrogenases/reductases (SDR) family.

The sequence is that of Probable oxidoreductase EphD (ephD) from Mycobacterium bovis (strain ATCC BAA-935 / AF2122/97).